The chain runs to 1706 residues: Probable ATP-dependent RNA helicase DDX60-like (1706 aa).

The disordered stretch occupies residues 545 to 580; it reads RPKEDSSGASGEILQNTKPHQITKKSKKKSFLKEDQ. Residues 551–564 are compositionally biased toward polar residues; it reads SGASGEILQNTKPH. Positions 565–574 are enriched in basic residues; the sequence is QITKKSKKKS. The Helicase ATP-binding domain maps to 752 to 919; that stretch reads LDVVDKNESA…WLQSVKQYWK (168 aa). An ATP-binding site is contributed by 765-772; that stretch reads APTSSGKT. A DEAH box motif is present at residues 869–872; it reads DEVH. Residues 1205 to 1354 form the Helicase C-terminal domain; that stretch reads DVKALHTEIT…QFPLSITLVL (150 aa).

This sequence belongs to the helicase family.

It catalyses the reaction ATP + H2O = ADP + phosphate + H(+). This Homo sapiens (Human) protein is Probable ATP-dependent RNA helicase DDX60-like.